The sequence spans 375 residues: Growth/differentiation factor 8 (375 aa).

A signal peptide spans 1–23; it reads MQKLQLCVYIYLFMLIVAGPVDL. Positions 24–266 are excised as a propeptide; it reads NENSEQKENV…VTDTPKRSRR (243 aa). Residue Asn-71 is glycosylated (N-linked (GlcNAc...) asparagine). 4 cysteine pairs are disulfide-bonded: Cys-272–Cys-282, Cys-281–Cys-340, Cys-309–Cys-372, and Cys-313–Cys-374.

The protein belongs to the TGF-beta family. In terms of assembly, homodimer; disulfide-linked. Interacts with WFIKKN2, leading to inhibit its activity. Interacts with FST3. Post-translationally, synthesized as large precursor molecule that undergoes proteolytic cleavage to generate an N-terminal propeptide and a disulfide linked C-terminal dimer, which is the biologically active molecule. The circulating form consists of a latent complex of the C-terminal dimer and other proteins, including its propeptide, which maintain the C-terminal dimer in a latent, inactive state. Ligand activation requires additional cleavage of the prodomain by a tolloid-like metalloproteinase.

The protein localises to the secreted. Its function is as follows. Acts specifically as a negative regulator of skeletal muscle growth. The polypeptide is Growth/differentiation factor 8 (MSTN) (Homo sapiens (Human)).